Consider the following 543-residue polypeptide: GPI mannosyltransferase 4 (543 aa).

Helical transmembrane passes span Thr5 to Pro25, Val98 to Ala118, Leu176 to Ile196, Pro213 to Val233, and Leu353 to His373. Asn428 is a glycosylation site (N-linked (GlcNAc...) asparagine).

The protein belongs to the glycosyltransferase 22 family. PIGZ subfamily.

It is found in the endoplasmic reticulum membrane. It participates in glycolipid biosynthesis; glycosylphosphatidylinositol-anchor biosynthesis. In terms of biological role, alpha-1,2-mannosyltransferase involved in glycosylphosphatidylinositol-anchor biosynthesis. Transfers a fourth mannose to trimannosyl-GPIs during GPI precursor assembly. The presence of a fourth mannose in GPI is essential in fungi. The polypeptide is GPI mannosyltransferase 4 (smp3) (Aspergillus oryzae (strain ATCC 42149 / RIB 40) (Yellow koji mold)).